The following is a 345-amino-acid chain: Beta-hexosaminidase (345 aa).

Substrate contacts are provided by residues Asp60, Arg68, Arg132, and Lys162–His163. The active-site Proton donor/acceptor is the His175. Residue Asp247 is the Nucleophile of the active site.

The protein belongs to the glycosyl hydrolase 3 family. NagZ subfamily.

Its subcellular location is the cytoplasm. The catalysed reaction is Hydrolysis of terminal non-reducing N-acetyl-D-hexosamine residues in N-acetyl-beta-D-hexosaminides.. It participates in cell wall biogenesis; peptidoglycan recycling. Its function is as follows. Plays a role in peptidoglycan recycling by cleaving the terminal beta-1,4-linked N-acetylglucosamine (GlcNAc) from peptide-linked peptidoglycan fragments, giving rise to free GlcNAc, anhydro-N-acetylmuramic acid and anhydro-N-acetylmuramic acid-linked peptides. This Actinobacillus pleuropneumoniae serotype 5b (strain L20) protein is Beta-hexosaminidase.